Consider the following 112-residue polypeptide: 2Fe-2S ferredoxin (112 aa).

Residues 5–107 (IKVTFIINDG…GIKVHLPAAT (103 aa)) enclose the 2Fe-2S ferredoxin-type domain. The [2Fe-2S] cluster site is built by cysteine 42, cysteine 48, cysteine 51, and cysteine 88.

This sequence belongs to the adrenodoxin/putidaredoxin family. [2Fe-2S] cluster is required as a cofactor.

Functionally, ferredoxin are iron-sulfur proteins that transfer electrons in a wide variety of metabolic reactions. This Rickettsia rickettsii protein is 2Fe-2S ferredoxin (fdxB).